The following is a 37-amino-acid chain: Large ribosomal subunit protein bL36 (37 aa).

It belongs to the bacterial ribosomal protein bL36 family.

The protein is Large ribosomal subunit protein bL36 of Gloeobacter violaceus (strain ATCC 29082 / PCC 7421).